A 106-amino-acid polypeptide reads, in one-letter code: Large ribosomal subunit protein bL21 (106 aa).

It belongs to the bacterial ribosomal protein bL21 family. As to quaternary structure, part of the 50S ribosomal subunit. Contacts protein L20.

In terms of biological role, this protein binds to 23S rRNA in the presence of protein L20. In Fervidobacterium nodosum (strain ATCC 35602 / DSM 5306 / Rt17-B1), this protein is Large ribosomal subunit protein bL21.